Here is a 421-residue protein sequence, read N- to C-terminus: 3-isopropylmalate dehydratase large subunit (421 aa).

[4Fe-4S] cluster-binding residues include C300, C360, and C363.

Belongs to the aconitase/IPM isomerase family. LeuC type 2 subfamily. Heterodimer of LeuC and LeuD. It depends on [4Fe-4S] cluster as a cofactor.

It catalyses the reaction (2R,3S)-3-isopropylmalate = (2S)-2-isopropylmalate. It functions in the pathway amino-acid biosynthesis; L-leucine biosynthesis; L-leucine from 3-methyl-2-oxobutanoate: step 2/4. Its function is as follows. Catalyzes the isomerization between 2-isopropylmalate and 3-isopropylmalate, via the formation of 2-isopropylmaleate. The chain is 3-isopropylmalate dehydratase large subunit from Moorella thermoacetica (strain ATCC 39073 / JCM 9320).